The primary structure comprises 157 residues: MNRGPPLRSRPPSSPPPASAFPGPSPFPSPSPANSLPSASPPPPTCTPSSPVSRPFASARLRTSHPPRCPHRSAPPSAPSPPFTPPHPLPTPTPSSSPRSPWLSLAPLPTSSASLASFPPPPSSFSSPSSPSTSPLSPSSSSFPSSSSFSFLVPSNS.

Residues 1 to 157 form a disordered region; sequence MNRGPPLRSR…SFSFLVPSNS (157 aa). The segment covering 8-31 has biased composition (pro residues); the sequence is RSRPPSSPPPASAFPGPSPFPSPS. Residues 62 to 71 are compositionally biased toward basic residues; the sequence is RTSHPPRCPH. The segment covering 76–95 has biased composition (pro residues); that stretch reads PSAPSPPFTPPHPLPTPTPS. Low complexity-rich tracts occupy residues 96–117 and 124–157; these read SSPR…SLAS and SFSS…PSNS.

This is an uncharacterized protein from Vitis vinifera (Grape).